The chain runs to 129 residues: Large ribosomal subunit protein bL20 (129 aa).

It belongs to the bacterial ribosomal protein bL20 family.

Binds directly to 23S ribosomal RNA and is necessary for the in vitro assembly process of the 50S ribosomal subunit. It is not involved in the protein synthesizing functions of that subunit. This chain is Large ribosomal subunit protein bL20, found in Mycobacterium marinum (strain ATCC BAA-535 / M).